The primary structure comprises 136 residues: Small nuclear ribonucleoprotein Sm D3 (136 aa).

The 73-residue stretch at 6–78 (VPIKILHEAE…IRFMILPDML (73 aa)) folds into the Sm domain. The interval 98–136 (GLGGLDQRGRGRGTAFRRPMGRGGPRGMSRPGGAPTFRG) is disordered.

It belongs to the snRNP core protein family.

It localises to the nucleus. It is found in the cytoplasm. The protein localises to the cytosol. Its function is as follows. Plays a role in pre-mRNA splicing as a core component of the spliceosomal U1, U2, U4 and U5 small nuclear ribonucleoproteins (snRNPs), the building blocks of the spliceosome. In Caenorhabditis elegans, this protein is Small nuclear ribonucleoprotein Sm D3 (snr-1).